Here is a 1378-residue protein sequence, read N- to C-terminus: Attractin-like protein 1 (1378 aa).

The first 51 residues, 1-51 (MEPGVRARSGAPQPASPVLWRARPAGGGGASSWLLLDGNSWLLCYGFLYLA), serve as a signal peptide directing secretion. Positions 52–90 (LYAQVSQSKPCERTGSCFSGRCVNSTCLCDPGWVGDQCQ) constitute an EGF-like 1 domain. The Extracellular portion of the chain corresponds to 52–1229 (LYAQVSQSKP…FSQHNTIMDL (1178 aa)). Intrachain disulfides connect C62–C78, C80–C89, and C92–C118. A glycan (N-linked (GlcNAc...) asparagine) is linked at N75. A CUB domain is found at 92-208 (CQGRFKLTEP…TGFNIFYSIN (117 aa)). N173 and N197 each carry an N-linked (GlcNAc...) asparagine glycan. Residues 206 to 244 (SINSCPNNCSGHGKCTTSVSVASQVYCECDKYWKGEACD) enclose the EGF-like 2 domain. Intrachain disulfides connect C210-C220, C214-C232, and C234-C243. Kelch repeat units follow at residues 315-364 (FMWV…LYQE), 366-414 (IFMY…EGHS), 426-474 (VMIV…SVYD), 479-530 (SIYV…LING), 532-590 (MLIF…VING), and 591-637 (SMYI…WNKN). An N-linked (GlcNAc...) asparagine glycan is attached at N379. 3 consecutive PSI domains span residues 613–656 (NCKA…AKCP), 665–708 (RCYR…TKCH), and 714–759 (ICNK…DACL). N703 is a glycosylation site (N-linked (GlcNAc...) asparagine). The C-type lectin domain occupies 754–872 (VGDACLRINS…TSMADGLVCE (119 aa)). Residues C775 and C871 are joined by a disulfide bond. 2 N-linked (GlcNAc...) asparagine glycosylation sites follow: N777 and N897. 2 PSI domains span residues 888–938 (PCSL…ATCS) and 941–1011 (NCSG…IQCP). 8 disulfide bridges follow: C1013/C1021, C1015/C1027, C1030/C1039, C1042/C1056, C1059/C1068, C1061/C1075, C1077/C1087, and C1090/C1105. Laminin EGF-like domains lie at 1013–1058 (CQCN…QCTA) and 1059–1107 (CTCG…TCYY). A glycan (N-linked (GlcNAc...) asparagine) is linked at N1156. A helical transmembrane segment spans residues 1230 to 1250 (VQFFVTFFSCFLSLLLVAAVV). The Cytoplasmic segment spans residues 1251–1378 (WKIKQTCWAS…HLSTRQGTCV (128 aa)). The tract at residues 1287–1324 (VGAEQTDFLRGPLEGAPKPIAIEPCAGNRAAVLTVFLC) is interaction with MC4R. Positions 1351–1378 (QQKPSDNKDKTSGVRNRKHLSTRQGTCV) are disordered.

Interacts with MC4R. Highly expressed in brain, heart, lung, kidney and liver. In the central nervous system, it is highly expressed in the dentate gyrus, CA1-3 regions of the hippocampus, and the ventral taenia tecta.

The protein resides in the cell membrane. Functionally, may play a role in melanocortin signaling pathways that regulate energy homeostasis. The sequence is that of Attractin-like protein 1 (Atrnl1) from Mus musculus (Mouse).